The sequence spans 337 residues: Dihydroorotate dehydrogenase (quinone) (337 aa).

FMN is bound by residues 62–66 (AGLDK) and threonine 86. Lysine 66 serves as a coordination point for substrate. 111–115 (NRFGF) lines the substrate pocket. FMN contacts are provided by asparagine 139 and asparagine 172. Asparagine 172 contacts substrate. The Nucleophile role is filled by serine 175. Asparagine 177 is a substrate binding site. FMN contacts are provided by lysine 217 and threonine 245. 246 to 247 (NT) contributes to the substrate binding site. FMN contacts are provided by residues glycine 268, glycine 297, and 318–319 (YS).

Belongs to the dihydroorotate dehydrogenase family. Type 2 subfamily. Monomer. The cofactor is FMN.

It localises to the cell membrane. The enzyme catalyses (S)-dihydroorotate + a quinone = orotate + a quinol. Its pathway is pyrimidine metabolism; UMP biosynthesis via de novo pathway; orotate from (S)-dihydroorotate (quinone route): step 1/1. Functionally, catalyzes the conversion of dihydroorotate to orotate with quinone as electron acceptor. The polypeptide is Dihydroorotate dehydrogenase (quinone) (Methylobacillus flagellatus (strain ATCC 51484 / DSM 6875 / VKM B-1610 / KT)).